The following is a 124-amino-acid chain: uncharacterized protein (124 aa).

2 disordered regions span residues 1–26 (MRRQ…QPRP) and 100–124 (IPGQ…GLRR). Residues 102–115 (GQQSRNCSLPQTKY) are compositionally biased toward polar residues.

The protein localises to the cytoplasm. The protein resides in the cytoskeleton. It localises to the cilium basal body. This is an uncharacterized protein from Rattus norvegicus (Rat).